The following is a 159-amino-acid chain: Ribosome maturation factor RimP (159 aa).

It belongs to the RimP family.

It is found in the cytoplasm. Functionally, required for maturation of 30S ribosomal subunits. The polypeptide is Ribosome maturation factor RimP (Streptococcus pneumoniae serotype 2 (strain D39 / NCTC 7466)).